A 128-amino-acid polypeptide reads, in one-letter code: UPF0325 protein YaeH (128 aa).

The protein belongs to the UPF0325 family.

The polypeptide is UPF0325 protein YaeH (Salmonella agona (strain SL483)).